Reading from the N-terminus, the 267-residue chain is Stage 0 sporulation protein A (267 aa).

Residues 5 to 123 (KVCVADDNRE…NLVGHIRQVS (119 aa)) enclose the Response regulatory domain. The Ca(2+) site is built by D10, D11, and D56. D56 bears the 4-aspartylphosphate mark. The interval 126–150 (ASSVTHRAPSSQSSIIRSSQPEPKK) is disordered. Over residues 135-145 (SSQSSIIRSSQ) the composition is skewed to low complexity. The segment at residues 199–218 (PDIAKKFNTTASRVERAIRH) is a DNA-binding region (H-T-H motif).

Interacts with small protein YqaH, which is encoded in the skin prophage-like element. Requires Ca(2+) as cofactor. In terms of processing, phosphorylated by KinA and KinB.

Its subcellular location is the cytoplasm. Functionally, may play the central regulatory role in sporulation. It may be an element of the effector pathway responsible for the activation of sporulation genes in response to nutritional stress. Spo0A may act in concert with Spo0H (a sigma factor) to control the expression of some genes that are critical to the sporulation process. Repressor of abrB, activator of the spoIIa operon. Binds the DNA sequence 5'-TGNCGAA-3' (0A box). This Bacillus subtilis (strain 168) protein is Stage 0 sporulation protein A (spo0A).